We begin with the raw amino-acid sequence, 421 residues long: ATP-dependent RNA helicase RhlB (421 aa).

The short motif at 9–37 (QKFSDFALHAKVIEALENKGFHYCTPIQA) is the Q motif element. Positions 40–219 (LPLTLAGRDV…FEQMNNAEYV (180 aa)) constitute a Helicase ATP-binding domain. An ATP-binding site is contributed by 53–60 (AQTGTGKT). The DEAD box motif lies at 165–168 (DEAD). The Helicase C-terminal domain occupies 245–390 (RLLQTLIEEE…QSKYNPDALL (146 aa)). Residues 386 to 421 (PDALLSELPPPKRLTRARSGNGPRRTGAPRNRRRPG) are disordered. Low complexity predominate over residues 405-414 (GNGPRRTGAP).

Belongs to the DEAD box helicase family. RhlB subfamily. Component of the RNA degradosome, which is a multiprotein complex involved in RNA processing and mRNA degradation.

It localises to the cytoplasm. It catalyses the reaction ATP + H2O = ADP + phosphate + H(+). Its function is as follows. DEAD-box RNA helicase involved in RNA degradation. Has RNA-dependent ATPase activity and unwinds double-stranded RNA. This chain is ATP-dependent RNA helicase RhlB, found in Enterobacter sp. (strain 638).